The sequence spans 210 residues: Orotate phosphoribosyltransferase (210 aa).

5-phospho-alpha-D-ribose 1-diphosphate-binding positions include Arg97, Lys101, His103, and 123–131 (EDLISTGGS). Ser127 contributes to the orotate binding site.

Belongs to the purine/pyrimidine phosphoribosyltransferase family. PyrE subfamily. As to quaternary structure, homodimer. Mg(2+) is required as a cofactor.

The enzyme catalyses orotidine 5'-phosphate + diphosphate = orotate + 5-phospho-alpha-D-ribose 1-diphosphate. It participates in pyrimidine metabolism; UMP biosynthesis via de novo pathway; UMP from orotate: step 1/2. Catalyzes the transfer of a ribosyl phosphate group from 5-phosphoribose 1-diphosphate to orotate, leading to the formation of orotidine monophosphate (OMP). This Porphyromonas gingivalis (strain ATCC BAA-308 / W83) protein is Orotate phosphoribosyltransferase.